Consider the following 649-residue polypeptide: 1-deoxy-D-xylulose-5-phosphate synthase (649 aa).

Residues His-84 and 125 to 127 (GHS) contribute to the thiamine diphosphate site. Position 156 (Asp-156) interacts with Mg(2+). Thiamine diphosphate is bound by residues 157 to 158 (GS), Asn-185, Phe-292, and Glu-385. Residue Asn-185 coordinates Mg(2+).

The protein belongs to the transketolase family. DXPS subfamily. As to quaternary structure, homodimer. It depends on Mg(2+) as a cofactor. The cofactor is thiamine diphosphate.

The catalysed reaction is D-glyceraldehyde 3-phosphate + pyruvate + H(+) = 1-deoxy-D-xylulose 5-phosphate + CO2. It functions in the pathway metabolic intermediate biosynthesis; 1-deoxy-D-xylulose 5-phosphate biosynthesis; 1-deoxy-D-xylulose 5-phosphate from D-glyceraldehyde 3-phosphate and pyruvate: step 1/1. Catalyzes the acyloin condensation reaction between C atoms 2 and 3 of pyruvate and glyceraldehyde 3-phosphate to yield 1-deoxy-D-xylulose-5-phosphate (DXP). The polypeptide is 1-deoxy-D-xylulose-5-phosphate synthase (Saccharophagus degradans (strain 2-40 / ATCC 43961 / DSM 17024)).